Here is a 571-residue protein sequence, read N- to C-terminus: Protein dead ringer homolog (571 aa).

Disordered regions lie at residues Gln45–Lys117 and Lys190–Gly229. Residues Arg49–Arg77 show a composition bias toward basic and acidic residues. Residues Asp195–Pro206 are compositionally biased toward polar residues. Positions Thr207–Thr224 are enriched in low complexity. The 93-residue stretch at Asp249–Glu341 folds into the ARID domain. Positions Ala459–Gln471 are enriched in low complexity. The segment at Ala459–Ser528 is disordered. Positions Ser473–His558 constitute an REKLES domain. 2 stretches are compositionally biased toward basic and acidic residues: residues Pro487–Arg507 and Met518–Met527.

It is found in the nucleus. Functionally, transcription factor. This chain is Protein dead ringer homolog (Ci-DRIL1/2), found in Ciona intestinalis (Transparent sea squirt).